A 105-amino-acid polypeptide reads, in one-letter code: uncharacterized protein (105 aa).

The helical transmembrane segment at 41–62 (GIITKIAASPFVIVLYFNTAFF) threads the bilayer.

The protein localises to the membrane. This is an uncharacterized protein from Saccharomyces cerevisiae (strain ATCC 204508 / S288c) (Baker's yeast).